Consider the following 1226-residue polypeptide: DNA-directed RNA polymerase subunit beta (1226 aa).

This sequence belongs to the RNA polymerase beta chain family. The RNAP catalytic core consists of 2 alpha, 1 beta, 1 beta' and 1 omega subunit. When a sigma factor is associated with the core the holoenzyme is formed, which can initiate transcription.

It carries out the reaction RNA(n) + a ribonucleoside 5'-triphosphate = RNA(n+1) + diphosphate. DNA-dependent RNA polymerase catalyzes the transcription of DNA into RNA using the four ribonucleoside triphosphates as substrates. The protein is DNA-directed RNA polymerase subunit beta of Leptospira interrogans serogroup Icterohaemorrhagiae serovar copenhageni (strain Fiocruz L1-130).